A 71-amino-acid chain; its full sequence is Conotoxin Bu25 (71 aa).

Positions 1–21 (MGMRMMVTVFPLVVLATTVVS) are cleaved as a signal peptide. Positions 22 to 44 (LRSNRASDGRRGIVNKLNDLVPK) are excised as a propeptide. Arg-70 is subject to Arginine amide.

The protein belongs to the conotoxin A superfamily. Post-translationally, contains 3 disulfide bonds. They are not indicated here, since framework IV presents two different connectivities (I-V, II-III, IV-VI and I-III, II-V, IV-VI). Expressed by the venom duct.

The protein resides in the secreted. The protein is Conotoxin Bu25 of Conus bullatus (Bubble cone).